The following is a 254-amino-acid chain: 4-hydroxy-tetrahydrodipicolinate reductase (254 aa).

7-12 (GASGRI) lines the NAD(+) pocket. Arginine 35 is an NADP(+) binding site. NAD(+) contacts are provided by residues 91-93 (GTT) and 115-118 (AHNM). The active-site Proton donor/acceptor is histidine 147. (S)-2,3,4,5-tetrahydrodipicolinate is bound at residue histidine 148. Lysine 151 serves as the catalytic Proton donor. (S)-2,3,4,5-tetrahydrodipicolinate is bound at residue 157-158 (GT).

This sequence belongs to the DapB family.

It localises to the cytoplasm. It catalyses the reaction (S)-2,3,4,5-tetrahydrodipicolinate + NAD(+) + H2O = (2S,4S)-4-hydroxy-2,3,4,5-tetrahydrodipicolinate + NADH + H(+). The enzyme catalyses (S)-2,3,4,5-tetrahydrodipicolinate + NADP(+) + H2O = (2S,4S)-4-hydroxy-2,3,4,5-tetrahydrodipicolinate + NADPH + H(+). The protein operates within amino-acid biosynthesis; L-lysine biosynthesis via DAP pathway; (S)-tetrahydrodipicolinate from L-aspartate: step 4/4. In terms of biological role, catalyzes the conversion of 4-hydroxy-tetrahydrodipicolinate (HTPA) to tetrahydrodipicolinate. The polypeptide is 4-hydroxy-tetrahydrodipicolinate reductase (Helicobacter pylori (strain ATCC 700392 / 26695) (Campylobacter pylori)).